The chain runs to 379 residues: Cytochrome b (379 aa).

A run of 4 helical transmembrane segments spans residues 33–53, 77–98, 113–133, and 178–198; these read FGSLLGMCLVIQILTGLFLAM, WLIRYLHANGASMFFICLFIHV, WNIGIILLLTTMATAFVGYVL, and FFAFHFILPFIIAAFALVHLL. H83 and H97 together coordinate heme b. Heme b-binding residues include H182 and H196. H201 provides a ligand contact to a ubiquinone. The next 4 helical transmembrane spans lie at 226 to 246, 288 to 308, 320 to 340, and 347 to 367; these read IKDLLGIFLLLLVLMTLALFF, LGGVLALVLSILILAAFPLLN, VTQTIYWIFIANLLVLTWIGG, and FTTIGQIASITYFTIIIILIP.

It belongs to the cytochrome b family. As to quaternary structure, the cytochrome bc1 complex contains 11 subunits: 3 respiratory subunits (MT-CYB, CYC1 and UQCRFS1), 2 core proteins (UQCRC1 and UQCRC2) and 6 low-molecular weight proteins (UQCRH/QCR6, UQCRB/QCR7, UQCRQ/QCR8, UQCR10/QCR9, UQCR11/QCR10 and a cleavage product of UQCRFS1). This cytochrome bc1 complex then forms a dimer. It depends on heme b as a cofactor.

The protein localises to the mitochondrion inner membrane. Its function is as follows. Component of the ubiquinol-cytochrome c reductase complex (complex III or cytochrome b-c1 complex) that is part of the mitochondrial respiratory chain. The b-c1 complex mediates electron transfer from ubiquinol to cytochrome c. Contributes to the generation of a proton gradient across the mitochondrial membrane that is then used for ATP synthesis. The polypeptide is Cytochrome b (MT-CYB) (Akodon lindberghi (Lindbergh's grass mouse)).